Reading from the N-terminus, the 297-residue chain is Nucleotide-binding protein Bphyt_0592 (297 aa).

8 to 15 contacts ATP; the sequence is GISGSGKS. 57–60 provides a ligand contact to GTP; the sequence is DARS.

This sequence belongs to the RapZ-like family.

Its function is as follows. Displays ATPase and GTPase activities. This is Nucleotide-binding protein Bphyt_0592 from Paraburkholderia phytofirmans (strain DSM 17436 / LMG 22146 / PsJN) (Burkholderia phytofirmans).